The sequence spans 308 residues: MNHFLDIHKTDAADLRAMIDQAGAMKQARLGRPKAAPDDEQPLKDRMVALIFEKPSTRTRVSFDVGVRQMGGQTMVLSGNDMQLGHGETIADTARVLSRYVDMIMIRTFDESVLAEMAEYADVPVINGLTDRSHPCQIMADVLTYEEHRGPIAGKKVVWTGDGNNVCSSFLHAAGQFGFDLTFSGPAQFDPEEEYMGFARQKGSKIVIERDAVKAVEGADLVVADTWVSMHDAQSAKERRHNLLRPYQVNAELMRHAKPDALFMHCLPAHREEEATSEVMDGPHSVIFDEAENRLHAQKAIMRWCLGA.

Carbamoyl phosphate-binding positions include 56–59, Q83, R107, and 134–137; these read STRT and HPCQ. L-ornithine contacts are provided by residues N165, D225, and 229-230; that span reads SM. Carbamoyl phosphate is bound by residues 266–267 and R294; that span reads CL.

It belongs to the aspartate/ornithine carbamoyltransferase superfamily. OTCase family.

The protein resides in the cytoplasm. It catalyses the reaction carbamoyl phosphate + L-ornithine = L-citrulline + phosphate + H(+). It functions in the pathway amino-acid biosynthesis; L-arginine biosynthesis; L-arginine from L-ornithine and carbamoyl phosphate: step 1/3. Reversibly catalyzes the transfer of the carbamoyl group from carbamoyl phosphate (CP) to the N(epsilon) atom of ornithine (ORN) to produce L-citrulline. In Ruegeria pomeroyi (strain ATCC 700808 / DSM 15171 / DSS-3) (Silicibacter pomeroyi), this protein is Ornithine carbamoyltransferase.